The sequence spans 383 residues: Gap junction alpha-1 protein (383 aa).

Residues G2 to K23 are Cytoplasmic-facing. At S5 the chain carries Phosphoserine. The helical transmembrane segment at V24–A44 threads the bilayer. Residues W45–R76 are Extracellular-facing. Cystine bridges form between C54/C193 and C188/C199. Residues F77 to F97 form a helical membrane-spanning segment. At Y98–Y156 the chain is on the cytoplasmic side. A Glycyl lysine isopeptide (Lys-Gly) (interchain with G-Cter in SUMO) cross-link involves residue K145. A helical membrane pass occupies residues I157 to I177. The Extracellular segment spans residues Y178–T208. A helical transmembrane segment spans residues I209–L229. Residues F230–I383 lie on the Cytoplasmic side of the membrane. K238 is covalently cross-linked (Glycyl lysine isopeptide (Lys-Gly) (interchain with G-Cter in SUMO)). Residues S245–I383 form an interaction with NOV region. Position 248 is a phosphotyrosine (Y248). Residues S256, S258, and S263 each carry the phosphoserine modification. The interval K265–I383 is interaction with UBQLN4. C272 carries the S-nitrosocysteine modification. T276 is subject to Phosphothreonine. Phosphoserine is present on residues S307 and S315. Positions Q318 to A333 are enriched in polar residues. The disordered stretch occupies residues Q318 to I383. The residue at position 326 (S326) is a Phosphoserine; by CK1. A Phosphothreonine modification is found at T327. Residues S329 and S331 each carry the phosphoserine; by CK1 modification. Positions P339–H352 are enriched in basic and acidic residues. Residues S345 and S366 each carry the phosphoserine modification. Low complexity predominate over residues R363–R375. S369 is subject to Phosphoserine; by PKC/PRKCG and PKC/PRKCD. Phosphoserine occurs at positions 370 and 374.

The protein belongs to the connexin family. Alpha-type (group II) subfamily. A connexon is composed of a hexamer of connexins. Interacts with SGSM3. Interacts with RIC1/CIP150. Interacts with CNST and CSNK1D. Interacts (via C-terminus) with TJP1. Interacts (via C-terminus) with SRC (via SH3 domain). Interacts (not ubiquitinated) with UBQLN4 (via UBA domain). Interacts with NOV. Interacts with TMEM65. Interacts with ANK3/ANKG and PKP2. Post-translationally, phosphorylation at Ser-326, Ser-329 and Ser-331 by CK1 modulates gap junction assembly. Phosphorylated at Ser-369 by PRKCG; phosphorylation induces disassembly of gap junction plaques and inhibition of gap junction activity. Phosphorylation at Ser-369 by PRKCD triggers its internalization into small vesicles leading to proteasome-mediated degradation. In terms of processing, sumoylated with SUMO1, SUMO2 and SUMO3, which may regulate the level of functional Cx43 gap junctions at the plasma membrane. May be desumoylated by SENP1 or SENP2. Acetylated in the developing cortex; leading to delocalization from the cell membrane.

The protein localises to the cell membrane. It localises to the cell junction. Its subcellular location is the gap junction. It is found in the endoplasmic reticulum. Functionally, gap junction protein that acts as a regulator of bladder capacity. A gap junction consists of a cluster of closely packed pairs of transmembrane channels, the connexons, through which materials of low MW diffuse from one cell to a neighboring cell. May play a critical role in the physiology of hearing by participating in the recycling of potassium to the cochlear endolymph. Negative regulator of bladder functional capacity: acts by enhancing intercellular electrical and chemical transmission, thus sensitizing bladder muscles to cholinergic neural stimuli and causing them to contract. May play a role in cell growth inhibition through the regulation of NOV expression and localization. Plays an essential role in gap junction communication in the ventricles. The sequence is that of Gap junction alpha-1 protein (GJA1) from Bos taurus (Bovine).